We begin with the raw amino-acid sequence, 299 residues long: RING-H2 finger protein ATL20 (299 aa).

Residues 172 to 192 traverse the membrane as a helical segment; the sequence is LIITLCIIGGITATCIAAIRI. The RING-type; atypical zinc-finger motif lies at 253–295; it reads CPICLSEYASKETVRCMPECDHCFHVQCIDEWLKIHSSCPVCR.

This sequence belongs to the RING-type zinc finger family. ATL subfamily.

It localises to the membrane. The catalysed reaction is S-ubiquitinyl-[E2 ubiquitin-conjugating enzyme]-L-cysteine + [acceptor protein]-L-lysine = [E2 ubiquitin-conjugating enzyme]-L-cysteine + N(6)-ubiquitinyl-[acceptor protein]-L-lysine.. It participates in protein modification; protein ubiquitination. The chain is RING-H2 finger protein ATL20 (ATL20) from Arabidopsis thaliana (Mouse-ear cress).